A 448-amino-acid polypeptide reads, in one-letter code: tRNA modification GTPase MnmE (448 aa).

R21, E80, and K119 together coordinate (6S)-5-formyl-5,6,7,8-tetrahydrofolate. Residues 215–370 (GVKLAIVGRP…LSEEILKKVG (156 aa)) enclose the TrmE-type G domain. N225 lines the K(+) pocket. Residues 225–230 (NVGKSS), 244–250 (TDIAGTT), and 269–272 (DTAG) each bind GTP. Position 229 (S229) interacts with Mg(2+). K(+) contacts are provided by T244, I246, and T249. Position 250 (T250) interacts with Mg(2+). Residue K448 coordinates (6S)-5-formyl-5,6,7,8-tetrahydrofolate.

Belongs to the TRAFAC class TrmE-Era-EngA-EngB-Septin-like GTPase superfamily. TrmE GTPase family. Homodimer. Heterotetramer of two MnmE and two MnmG subunits. It depends on K(+) as a cofactor.

The protein resides in the cytoplasm. In terms of biological role, exhibits a very high intrinsic GTPase hydrolysis rate. Involved in the addition of a carboxymethylaminomethyl (cmnm) group at the wobble position (U34) of certain tRNAs, forming tRNA-cmnm(5)s(2)U34. This chain is tRNA modification GTPase MnmE, found in Aquifex aeolicus (strain VF5).